Reading from the N-terminus, the 313-residue chain is Formimidoylglutamase (313 aa).

Mn(2+)-binding residues include His130, Asp155, His157, Asp159, Asp241, and Asp243.

This sequence belongs to the arginase family. It depends on Mn(2+) as a cofactor.

It carries out the reaction N-formimidoyl-L-glutamate + H2O = formamide + L-glutamate. The protein operates within amino-acid degradation; L-histidine degradation into L-glutamate; L-glutamate from N-formimidoyl-L-glutamate (hydrolase route): step 1/1. Functionally, catalyzes the conversion of N-formimidoyl-L-glutamate to L-glutamate and formamide. This Citrobacter koseri (strain ATCC BAA-895 / CDC 4225-83 / SGSC4696) protein is Formimidoylglutamase.